Reading from the N-terminus, the 356-residue chain is V-type proton ATPase subunit d (356 aa).

It belongs to the V-ATPase V0D/AC39 subunit family. As to quaternary structure, V-ATPase is a heteromultimeric enzyme composed of a peripheral catalytic V1 complex (components A to H) attached to an integral membrane V0 proton pore complex (components: a, c, c', c'' and d).

Subunit of the integral membrane V0 complex of vacuolar ATPase. Vacuolar ATPase is responsible for acidifying a variety of intracellular compartments in eukaryotic cells, thus providing most of the energy required for transport processes in the vacuolar system. The polypeptide is V-type proton ATPase subunit d (vatD-1) (Dictyostelium discoideum (Social amoeba)).